The following is a 421-amino-acid chain: MKKHSARVAPLSACNSPVLTLTKVEGEERPRDSPGPAEAQAPAGVEAGGRASRRCWTCSRAQLKKIFWGVAVVLCVCSSWAGSTQLAKLTFRKFDAPFTLTWFATNWNFLFFPLYYVGHVCKSTEKQSVKQRYRECCRFFGDNGLTLKVFFTKAAPFGVLWTLTNYLYLHAIKKINTTDVSVLFCCNKAFVFLLSWIVLRDRFMGVRIVAAILAIAGIVMMTYADGFHSHSVIGIALVVASASMSALYKVLFKLLLGSAKFGEAALFLSILGVFNILFITCIPIILYFTKVEYWSSFDDIPWGNLCGFSVLLLTFNIVLNFGIAVTYPTLMSLGIVLSIPVNAVIDHYTSQIVFNGVRVIAIIIIGLGFLLLLLPEEWDVWLIKLLTRLKVRKKEEPAEGAADLSSGPQSKNRRARPSFAR.

Positions 25-45 (EGEERPRDSPGPAEAQAPAGV) are disordered. 10 helical membrane passes run 66 to 86 (IFWGVAVVLCVCSSWAGSTQL), 98 to 118 (FTLTWFATNWNFLFFPLYYVG), 149 to 169 (VFFTKAAPFGVLWTLTNYLYL), 179 to 199 (DVSVLFCCNKAFVFLLSWIVL), 208 to 228 (IVAAILAIAGIVMMTYADGFH), 232 to 252 (VIGIALVVASASMSALYKVLF), 266 to 286 (LFLSILGVFNILFITCIPIIL), 305 to 325 (LCGFSVLLLTFNIVLNFGIAV), 326 to 346 (TYPTLMSLGIVLSIPVNAVID), and 352 to 372 (IVFNGVRVIAIIIIGLGFLLL). Residues 393–421 (KKEEPAEGAADLSSGPQSKNRRARPSFAR) are disordered. Basic residues predominate over residues 411 to 421 (KNRRARPSFAR).

Belongs to the SLC35F solute transporter family. As to expression, expressed at the highest levels in the adult cerebellum.

It is found in the membrane. The catalysed reaction is thiamine(in) = thiamine(out). Functionally, mediates thiamine transport. The chain is Solute carrier family 35 member F3 from Homo sapiens (Human).